The chain runs to 577 residues: Proline--tRNA ligase (577 aa).

The protein belongs to the class-II aminoacyl-tRNA synthetase family. ProS type 1 subfamily. Homodimer.

The protein resides in the cytoplasm. The enzyme catalyses tRNA(Pro) + L-proline + ATP = L-prolyl-tRNA(Pro) + AMP + diphosphate. Functionally, catalyzes the attachment of proline to tRNA(Pro) in a two-step reaction: proline is first activated by ATP to form Pro-AMP and then transferred to the acceptor end of tRNA(Pro). As ProRS can inadvertently accommodate and process non-cognate amino acids such as alanine and cysteine, to avoid such errors it has two additional distinct editing activities against alanine. One activity is designated as 'pretransfer' editing and involves the tRNA(Pro)-independent hydrolysis of activated Ala-AMP. The other activity is designated 'posttransfer' editing and involves deacylation of mischarged Ala-tRNA(Pro). The misacylated Cys-tRNA(Pro) is not edited by ProRS. In Helicobacter pylori (strain G27), this protein is Proline--tRNA ligase.